The primary structure comprises 164 residues: S-ribosylhomocysteine lyase (164 aa).

Residues histidine 61, histidine 65, and cysteine 131 each coordinate Fe cation.

The protein belongs to the LuxS family. Homodimer. Requires Fe cation as cofactor.

The enzyme catalyses S-(5-deoxy-D-ribos-5-yl)-L-homocysteine = (S)-4,5-dihydroxypentane-2,3-dione + L-homocysteine. In terms of biological role, involved in the synthesis of autoinducer 2 (AI-2) which is secreted by bacteria and is used to communicate both the cell density and the metabolic potential of the environment. The regulation of gene expression in response to changes in cell density is called quorum sensing. Catalyzes the transformation of S-ribosylhomocysteine (RHC) to homocysteine (HC) and 4,5-dihydroxy-2,3-pentadione (DPD). The polypeptide is S-ribosylhomocysteine lyase (Bifidobacterium longum (strain DJO10A)).